We begin with the raw amino-acid sequence, 193 residues long: Der GTPase-activating protein YihI (193 aa).

Basic residues predominate over residues 1–12 (MSAKQPNRKPTG). Disordered stretches follow at residues 1–91 (MSAK…KLVM) and 143–193 (IIDN…PKKK). Basic and acidic residues predominate over residues 13 to 26 (KRKESDASALDGRE). A compositionally biased stretch (basic residues) spans 27 to 36 (RKRAAKRKGL). Polar residues predominate over residues 40-54 (SRQQAEQSSKNNNGK). Acidic residues predominate over residues 145 to 160 (DNDDDEEDDGSFDDAS). A compositionally biased stretch (basic and acidic residues) spans 184–193 (PEPKPEPKKK).

This sequence belongs to the YihI family. As to quaternary structure, interacts with Der.

Functionally, a GTPase-activating protein (GAP) that modifies Der/EngA GTPase function. May play a role in ribosome biogenesis. The polypeptide is Der GTPase-activating protein YihI (Aeromonas salmonicida (strain A449)).